The chain runs to 275 residues: Interleukin-2 receptor subunit alpha (275 aa).

The first 21 residues, 1-21 (MEPSLLMWRFFVFIVVPGCVT), serve as a signal peptide directing secretion. Residues 22–81 (EACHDDPPSLRNAMFKVFRYEVGTMINCDCKTGFRRVSAVMRCVGDSSHSAWENRCFCNS) enclose the Sushi 1 domain. The Extracellular segment spans residues 22–243 (EACHDDPPSL…DTFIFTTEYQ (222 aa)). 3 disulfide bridges follow: C24-C64, C49-C77, and C51-C79. N80 carries an N-linked (GlcNAc...) asparagine glycan. The tract at residues 88–130 (QVKQVTPAPEEHREKKHTDAQNQTQPPEEADLPGHCEEPPPWE) is disordered. A compositionally biased stretch (basic and acidic residues) spans 96 to 106 (PEEHREKKHTD). N-linked (GlcNAc...) asparagine glycosylation occurs at N109. The segment covering 119-130 (LPGHCEEPPPWE) has biased composition (basic and acidic residues). Positions 121 to 186 (GHCEEPPPWE…WTRPRLKCIR (66 aa)) constitute a Sushi 2 domain. 2 disulfide bridges follow: C123–C168 and C152–C184. The interval 188 to 221 (GEHGQASDDAEPQESTEAPPGSGTFLPTRMAGTT) is disordered. The chain crosses the membrane as a helical span at residues 244–262 (IAVAGCTLLLASILLLSCL). At 263 to 275 (TWQRKWKKNRRTI) the chain is on the cytoplasmic side.

As to quaternary structure, non-covalent dimer of an alpha and a beta subunit. IL2R exists in 3 different forms: a high affinity dimer, an intermediate affinity monomer (beta subunit), and a low affinity monomer (alpha subunit). The high and intermediate affinity forms also associate with a gamma subunit.

The protein localises to the membrane. In terms of biological role, receptor for interleukin-2. The receptor is involved in the regulation of immune tolerance by controlling regulatory T cells (TREGs) activity. TREGs suppress the activation and expansion of autoreactive T-cells. This is Interleukin-2 receptor subunit alpha (IL2RA) from Bos taurus (Bovine).